Here is a 384-residue protein sequence, read N- to C-terminus: MAGILAWFWNERFWLPHNVTWADLKNTEEATFPQAEDLYLAFPLAFCIFMVRLIFERFIAKPCAIALNIQANGPQTAQPNAILEKVFTAITKHPDEKRLEGLSKQLDWDVRSIQRWFRQRRNQEKPSTLTRFCESMWRFSFYLYVFSYGVRFLKQTPWLWNTRHCWYNYPYQPLTADLHYYYILELSFYWSLMVSQFTDIKRKDFGIMFLHHLATIFLITFSYVNNMARVGTLVLCLHDSADALLEAAKMANYAKFQKMCDLLFVMFAVVFITTRLGIFPLWVLNTTLFESWEIVGPYPSWWVFNLLLLLLQGLNCFWSYLIVKIACKTVSKGKVSKDDRSDIESSSDDEDSEPPGKKPHSSTTTNGTSGTNGYLLTGPCSVDD.

Residues 1-34 are Lumenal-facing; sequence MAGILAWFWNERFWLPHNVTWADLKNTEEATFPQ. Residue asparagine 18 is glycosylated (N-linked (GlcNAc...) asparagine). The helical transmembrane segment at 35-55 threads the bilayer; sequence AEDLYLAFPLAFCIFMVRLIF. Positions 66–127 are homeobox-like; sequence ALNIQANGPQ…RQRRNQEKPS (62 aa). The TLC domain occupies 130 to 331; sequence TRFCESMWRF…IVKIACKTVS (202 aa). 4 helical membrane passes run 174–194, 205–225, 263–283, and 303–323; these read LTAD…SLMV, FGIM…SYVN, LFVM…PLWV, and VFNL…YLIV. The Cytoplasmic segment spans residues 324–384; sequence KIACKTVSKG…LLTGPCSVDD (61 aa). Residues 335-384 are disordered; it reads VSKDDRSDIESSSDDEDSEPPGKKPHSSTTTNGTSGTNGYLLTGPCSVDD. The span at 361–373 shows a compositional bias: low complexity; it reads SSTTTNGTSGTNG.

Post-translationally, N-glycosylated. Glycosylation on Asn-18 is not necessary for function. Acetylated. Deacetylation by SIRT3 increases enzyme activity and promotes mitochondrial ceramide accumulation. In terms of processing, phosphorylated at the C-terminus by CK2. Broadly expressed, with highest levels in kidney and brain (at protein level).

It is found in the endoplasmic reticulum membrane. The catalysed reaction is a sphingoid base + hexadecanoyl-CoA = an N-hexadecanoyl-sphingoid base + CoA + H(+). It carries out the reaction sphinganine + hexadecanoyl-CoA = N-hexadecanoylsphinganine + CoA + H(+). The enzyme catalyses hexadecasphinganine + hexadecanoyl-CoA = N-hexadecanoylhexadecasphinganine + CoA + H(+). It catalyses the reaction sphing-4-enine + hexadecanoyl-CoA = N-hexadecanoylsphing-4-enine + CoA + H(+). The catalysed reaction is sphinganine + tetradecanoyl-CoA = N-(tetradecanoyl)-sphinganine + CoA + H(+). It carries out the reaction sphinganine + octadecanoyl-CoA = N-(octadecanoyl)-sphinganine + CoA + H(+). It participates in lipid metabolism; sphingolipid metabolism. Ceramide synthase that catalyzes the transfer of the acyl chain from acyl-CoA to a sphingoid base, with high selectivity toward palmitoyl-CoA (hexadecanoyl-CoA; C16:0-CoA). Can use other acyl donors, but with less efficiency. N-acylates sphinganine and sphingosine bases to form dihydroceramides and ceramides in de novo synthesis and salvage pathways, respectively. Ceramides generated by CERS6 play a role in inflammatory response. Acts as a regulator of metabolism and hepatic lipid accumulation. Under high fat diet, palmitoyl- (C16:0-) ceramides generated by CERS6 specifically bind the mitochondrial fission factor MFF, thereby promoting mitochondrial fragmentation and contributing to the development of obesity. The sequence is that of Ceramide synthase 6 from Mus musculus (Mouse).